The sequence spans 329 residues: tRNA-modifying protein YgfZ (329 aa).

Folate contacts are provided by tryptophan 28 and tryptophan 188.

This sequence belongs to the tRNA-modifying YgfZ family.

Its subcellular location is the cytoplasm. Functionally, folate-binding protein involved in regulating the level of ATP-DnaA and in the modification of some tRNAs. It is probably a key factor in regulatory networks that act via tRNA modification, such as initiation of chromosomal replication. This Photorhabdus laumondii subsp. laumondii (strain DSM 15139 / CIP 105565 / TT01) (Photorhabdus luminescens subsp. laumondii) protein is tRNA-modifying protein YgfZ.